Here is a 176-residue protein sequence, read N- to C-terminus: Vitamin K epoxide reductase complex subunit 1-like protein 1 (176 aa).

Topologically, residues 1–13 are cytoplasmic; the sequence is MAAPVLLRVSVPR. Residues 14 to 36 form a helical membrane-spanning segment; that stretch reads WERVARYAVCAAGILLSIYAYHV. Over 37–87 the chain is Lumenal; it reads EREKERDPEHRALCDLGPWVKCSAALASRWGRGFGLLGSIFGKDGVLNQPN. Cysteines 50 and 58 form a disulfide. Asn-87 provides a ligand contact to (S)-warfarin. A helical transmembrane segment spans residues 88–102; that stretch reads SVFGLIFYILQLLLG. Residues 103–107 are Cytoplasmic-facing; that stretch reads MTASA. The helical transmembrane segment at 108–135 threads the bilayer; that stretch reads VAALVLMTSSIVSVVGSLYLAYILYFVL. Topologically, residues 136–138 are lumenal; the sequence is KEF. A disulfide bond links Cys-139 and Cys-142. A helical membrane pass occupies residues 139 to 160; sequence CIICVTTYVLNFLLLIINYKRL. Phylloquinone-binding residues include Cys-142 and Tyr-146. Tyr-146 serves as a coordination point for (S)-warfarin. Over 161 to 176 the chain is Cytoplasmic; it reads VYLNEAWKRQLQPKED.

Belongs to the VKOR family. As to expression, detected in testis and lung.

The protein resides in the endoplasmic reticulum membrane. The catalysed reaction is phylloquinone + [protein]-disulfide + H2O = 2,3-epoxyphylloquinone + [protein]-dithiol. It catalyses the reaction phylloquinol + [protein]-disulfide = phylloquinone + [protein]-dithiol. Inhibited by warfarin (coumadin). Warfarin locks VKORC1 in both redox states into the closed conformation. Functionally, involved in vitamin K metabolism. Can reduce inactive vitamin K 2,3-epoxide to active vitamin K, and may contribute to vitamin K-mediated protection against oxidative stress. Plays a role in vitamin K-dependent gamma-carboxylation of Glu residues in target proteins. The polypeptide is Vitamin K epoxide reductase complex subunit 1-like protein 1 (Vkorc1l1) (Mus musculus (Mouse)).